Consider the following 1644-residue polypeptide: Peroxisome proliferator-activated receptor gamma coactivator-related protein 1 (1644 aa).

Disordered stretches follow at residues 1–61 (MAAR…DSSF), 170–249 (PERD…EVAG), 429–616 (LTPK…TSPV), 646–761 (AADP…PETP), 773–884 (SAPA…QPPG), 978–1074 (STVS…EGVV), and 1322–1507 (AAPP…NDHY). The segment covering 12 to 22 (APPPTGGPGPD) has biased composition (pro residues). Over residues 213 to 222 (SSPKLPSWRP) the composition is skewed to low complexity. The residue at position 232 (Ser232) is a Phosphoserine. The tract at residues 425–460 (IMESLTPKEPQSLPASASQGSQKVPRKGRKKKNKEQ) is necessary for interaction with CREB1 and NRF1 and for transcriptional coactivation. The segment covering 437 to 446 (LPASASQGSQ) has biased composition (polar residues). The segment covering 448–457 (VPRKGRKKKN) has biased composition (basic residues). A compositionally biased stretch (polar residues) spans 475-496 (SSRGQSTVSAEVNSQAGSSQKQ). Low complexity predominate over residues 515 to 524 (RAWARAWAAA). Ser541 is modified (phosphoserine). Polar residues predominate over residues 556–572 (ETSQANPTLSLNDSAQA). Positions 691–702 (DHPKVVSPEGKD) are enriched in basic and acidic residues. Positions 811–821 (MVSTHSEQVSS) are enriched in polar residues. Composition is skewed to pro residues over residues 828-864 (VRPP…PLLP) and 874-884 (RLPPPPLQPPG). A phosphoserine mark is found at Ser1059, Ser1393, and Ser1395. A necessary for interaction with CREB1 and NRF1 region spans residues 1361-1432 (EASPCRSEMN…SSSSSVSSSS (72 aa)). Composition is skewed to low complexity over residues 1409–1433 (SRSV…SSSR) and 1453–1489 (SSCS…VSPC). Residues 1523-1599 (RVVFIGKIPG…QPFDLCFGGR (77 aa)) enclose the RRM domain.

In terms of assembly, interacts with CREB1 and NRF1. As to expression, expressed in liver, heart, skeletal muscle, kidney and white and brown adipose tissues.

The protein resides in the nucleus. Its function is as follows. Acts as a coactivator during transcriptional activation of nuclear genes related to mitochondrial biogenesis and cell growth. Involved in the transcription coactivation of CREB and NRF1 target genes. This is Peroxisome proliferator-activated receptor gamma coactivator-related protein 1 (Pprc1) from Mus musculus (Mouse).